The sequence spans 358 residues: 7,8-didemethyl-8-hydroxy-5-deazariboflavin synthase (358 aa).

The Radical SAM core domain occupies Ile35 to Asn275. Positions 49, 53, and 56 each coordinate [4Fe-4S] cluster.

Belongs to the radical SAM superfamily. CofG family. As to quaternary structure, consists of two subunits, CofG and CofH. Requires [4Fe-4S] cluster as cofactor.

It carries out the reaction 5-amino-5-(4-hydroxybenzyl)-6-(D-ribitylimino)-5,6-dihydrouracil + S-adenosyl-L-methionine = 7,8-didemethyl-8-hydroxy-5-deazariboflavin + 5'-deoxyadenosine + L-methionine + NH4(+) + H(+). It participates in cofactor biosynthesis; coenzyme F0 biosynthesis. Functionally, catalyzes the radical-mediated synthesis of 7,8-didemethyl-8-hydroxy-5-deazariboflavin (FO) from 5-amino-5-(4-hydroxybenzyl)-6-(D-ribitylimino)-5,6-dihydrouracil. The chain is 7,8-didemethyl-8-hydroxy-5-deazariboflavin synthase (cofG) from Methanocaldococcus jannaschii (strain ATCC 43067 / DSM 2661 / JAL-1 / JCM 10045 / NBRC 100440) (Methanococcus jannaschii).